We begin with the raw amino-acid sequence, 480 residues long: Beta-amyrin 28-monooxygenase (480 aa).

Residues 3–23 (VFFLSLLLICVLSVSIRLYLL) traverse the membrane as a helical segment. Cys427 is a binding site for heme.

The protein belongs to the cytochrome P450 family. The cofactor is heme. As to expression, expressed in leaves, stems and fruit skin.

Its subcellular location is the membrane. It catalyses the reaction beta-amyrin + 3 reduced [NADPH--hemoprotein reductase] + 3 O2 = oleanolate + 3 oxidized [NADPH--hemoprotein reductase] + 4 H2O + 4 H(+). Catalyzes the carboxylation of beta-amyrin at the C-28 position to form oleanolic acid. May be involved in saponin biosynthesis in fruit skin. The sequence is that of Beta-amyrin 28-monooxygenase from Vitis vinifera (Grape).